The primary structure comprises 238 residues: Membrane protein 2 (238 aa).

It belongs to the varicellovirus ORF2 protein family. Post-translationally, phosphorylated by host.

Its subcellular location is the host membrane. This is Membrane protein 2 from Varicella-zoster virus (strain Dumas) (HHV-3).